The following is a 403-amino-acid chain: Tryptophan 2,3-dioxygenase (403 aa).

69–73 (FIVIH) provides a ligand contact to substrate. The PLD motif; required for enzymatic activity motif lies at 133-135 (PLD). Residue arginine 140 participates in substrate binding. Position 327 (histidine 327) interacts with heme. Residue threonine 341 participates in substrate binding.

It belongs to the tryptophan 2,3-dioxygenase family. Homotetramer. Dimer of dimers. The cofactor is heme. Expressed in body wall muscle cells, hypodermis, PLM neurons and touch-receptor neurons.

The catalysed reaction is L-tryptophan + O2 = N-formyl-L-kynurenine. The protein operates within amino-acid degradation; L-tryptophan degradation via kynurenine pathway; L-kynurenine from L-tryptophan: step 1/2. Heme-dependent dioxygenase that catalyzes the oxidative cleavage of the L-tryptophan (L-Trp) pyrrole ring and converts L-tryptophan to N-formyl-L-kynurenine. Catalyzes the oxidative cleavage of the indole moiety. Involved in regulation of protein homeostasis, longevity and reproducive life span. Specifically regulates proteotoxicity due to age-related aggregation of proteins like alpha-synuclein, via its effects on tryptophan metabolism. The chain is Tryptophan 2,3-dioxygenase from Caenorhabditis elegans.